Consider the following 103-residue polypeptide: Small ribosomal subunit protein uS10 (103 aa).

The protein belongs to the universal ribosomal protein uS10 family. As to quaternary structure, part of the 30S ribosomal subunit.

Its function is as follows. Involved in the binding of tRNA to the ribosomes. This is Small ribosomal subunit protein uS10 from Thioalkalivibrio sulfidiphilus (strain HL-EbGR7).